The primary structure comprises 136 residues: MAKSDVKGVNLGMGTGRRKSSVARVYIREGKGDIKINHKNFDVYMQLEKLKTIALSPLALTHTLGKYDIYINVYGGGISGQAGAIRHGIARALFDLDEEYKMVLKSNEFLTRDSRKVERKKFGKKKARKSFQFSKR.

This sequence belongs to the universal ribosomal protein uS9 family.

The sequence is that of Small ribosomal subunit protein uS9 from Borrelia recurrentis (strain A1).